The primary structure comprises 281 residues: 2-dehydro-3-deoxyphosphooctonate aldolase 1 (281 aa).

This sequence belongs to the KdsA family.

Its subcellular location is the cytoplasm. The enzyme catalyses D-arabinose 5-phosphate + phosphoenolpyruvate + H2O = 3-deoxy-alpha-D-manno-2-octulosonate-8-phosphate + phosphate. It functions in the pathway carbohydrate biosynthesis; 3-deoxy-D-manno-octulosonate biosynthesis; 3-deoxy-D-manno-octulosonate from D-ribulose 5-phosphate: step 2/3. It participates in bacterial outer membrane biogenesis; lipopolysaccharide biosynthesis. This chain is 2-dehydro-3-deoxyphosphooctonate aldolase 1 (kdsA1), found in Pseudomonas putida (strain ATCC 47054 / DSM 6125 / CFBP 8728 / NCIMB 11950 / KT2440).